The sequence spans 341 residues: Inner membrane ABC transporter permease protein YejE (341 aa).

Over 1–21 (MSRLSPVNQARWARFRHNRRG) the chain is Cytoplasmic. Residues 22-42 (YWSLWIFLVLFGLSLCSELIA) form a helical membrane-spanning segment. Residues 43–143 (NDKPLLVRYD…ARILYGTRIS (101 aa)) lie on the Periplasmic side of the membrane. The ABC transmembrane type-1 domain maps to 140 to 332 (TRISVLFGLM…LLIFIGEAVR (193 aa)). Residues 144–164 (VLFGLMLTLCSSVMGVLAGAL) traverse the membrane as a helical segment. Over 165–178 (QGYYGGKVDLWGQR) the chain is Cytoplasmic. The helical transmembrane segment at 179-199 (FIEVWSGMPTLFLIILLSSVV) threads the bilayer. Topologically, residues 200–201 (QP) are periplasmic. Residues 202 to 222 (NFWWLLAITVLFGWMSLVGVV) form a helical membrane-spanning segment. The Cytoplasmic segment spans residues 223 to 252 (RAEFLRTRNFDYIRAAQALGVSDRSIILRH). A helical transmembrane segment spans residues 253–273 (MLPNAMVATLTFLPFILCSSI). Residues 274–307 (TTLTSLDFLGFGLPLGSPSLGELLLQGKNNLQAP) lie on the Periplasmic side of the membrane. Residues 308–328 (WLGITAFLSVAILLSLLIFIG) form a helical membrane-spanning segment. The Cytoplasmic segment spans residues 329–341 (EAVRDAFDPNKAV).

It belongs to the binding-protein-dependent transport system permease family. OppBC subfamily.

It localises to the cell inner membrane. Functionally, probably part of a binding-protein-dependent transport system. Probably responsible for the translocation of the substrate across the membrane. This is Inner membrane ABC transporter permease protein YejE (yejE) from Escherichia coli (strain K12).